The sequence spans 356 residues: Glucose 1-dehydrogenase (356 aa).

Positions 1-26 (MDAIVVSKADRTPRLVDRPRPDPTPG) are disordered. Residues 8–21 (KADRTPRLVDRPRP) are compositionally biased toward basic and acidic residues. Asp38 contributes to the Zn(2+) binding site. Thr40 provides a ligand contact to substrate. Zn(2+) contacts are provided by His63 and Glu64. A disordered region spans residues 86 to 107 (TVRRPRGDPTPQFDRGQPDMAA). Residues Glu113 and Glu149 each contribute to the substrate site. Position 149 (Glu149) interacts with Zn(2+). Residues 180–183 (NGSL), 205–206 (RR), 270–272 (LGV), and 300–302 (SVN) contribute to the NADP(+) site. Residue Asn302 participates in substrate binding.

This sequence belongs to the zinc-containing alcohol dehydrogenase family. Glucose 1-dehydrogenase subfamily. Zn(2+) is required as a cofactor.

It carries out the reaction D-glucose + NAD(+) = D-glucono-1,5-lactone + NADH + H(+). The enzyme catalyses D-glucose + NADP(+) = D-glucono-1,5-lactone + NADPH + H(+). Functionally, catalyzes the NAD(P)(+)-dependent oxidation of D-glucose to D-gluconate via gluconolactone. Can utilize both NAD(+) and NADP(+) as electron acceptor. Is involved in the degradation of glucose through a modified Entner-Doudoroff pathway. The sequence is that of Glucose 1-dehydrogenase from Halobacterium salinarum (strain ATCC 700922 / JCM 11081 / NRC-1) (Halobacterium halobium).